A 94-amino-acid chain; its full sequence is Preprofallaxidin-9 (94 aa).

The signal sequence occupies residues 1 to 22 (MASLKKSLFLVLFLGLVSLSIC). The propeptide occupies 23–46 (EEEKRENEEDAEDENHEEESEEKR). The tract at residues 27 to 46 (RENEEDAEDENHEEESEEKR) is disordered. A compositionally biased stretch (acidic residues) spans 30 to 42 (EEDAEDENHEEES). The residue at position 62 (L62) is a Leucine amide. Positions 66–70 (SEEKR) are excised as a propeptide. M75 carries the methionine amide modification. Positions 79 to 83 (SEEKR) are excised as a propeptide. Position 88 is a methionine amide (M88). Residues 92 to 94 (SEE) constitute a propeptide that is removed on maturation.

Belongs to the frog skin active peptide (FSAP) family. Brevinin subfamily. Expressed by the skin glands.

The protein resides in the secreted. Fallaxidin-1.3 shows no antibacterial activity against Gram-positive or Gram-negative bacteria. Does not inhibit the formation of NO by neuronal nitric oxide synthase. Has no effect on splenocyte proliferation or smooth muscle contraction. In terms of biological role, fallaxidin-3.2 shows antibacterial activity against the Gram-positive bacteria E.faecalis (MIC=100 uM) and L.lactis (MIC=500 uM). No antibacterial activity against the Gram-positive bacteria B.cereus, L.innocua, M.luteus, S.epidermidis, S.uberis and S.aureus, or the Gram-negative bacteria E.cloacae and E.coli. The sequence is that of Preprofallaxidin-9 from Litoria fallax (Eastern dwarf tree frog).